We begin with the raw amino-acid sequence, 66 residues long: Large ribosomal subunit protein bL33c (66 aa).

It belongs to the bacterial ribosomal protein bL33 family.

It localises to the plastid. The protein resides in the chloroplast. This Acorus calamus (Sweet flag) protein is Large ribosomal subunit protein bL33c.